The sequence spans 820 residues: G-type lectin S-receptor-like serine/threonine-protein kinase At1g11280 (820 aa).

The first 28 residues, 1 to 28 (MGIHLGEIGIVLFPWFLWLSLFLSCGYA), serve as a signal peptide directing secretion. In terms of domain architecture, Bulb-type lectin spans 29 to 148 (AITISSPLTL…VSENLLWQSF (120 aa)). Residues 29 to 434 (AITISSPLTL…SELAGSRRTK (406 aa)) are Extracellular-facing. Residues asparagine 57, asparagine 92, asparagine 98, asparagine 241, and asparagine 272 are each glycosylated (N-linked (GlcNAc...) asparagine). In terms of domain architecture, EGF-like spans 283–319 (PANLCDLYGACGPFGLCVTSNPTKCKCMKGFVPKYKE). Cystine bridges form between cysteine 287–cysteine 299 and cysteine 293–cysteine 307. 3 N-linked (GlcNAc...) asparagine glycosylation sites follow: asparagine 325, asparagine 341, and asparagine 384. The PAN domain occupies 338–422 (CQANLSTKTQ…VGGEFLSIRL (85 aa)). Cystine bridges form between cysteine 377–cysteine 398 and cysteine 381–cysteine 387. The chain crosses the membrane as a helical span at residues 435–455 (IIVGSISLSIFVILAFGSYKY). At 456-820 (WRYRAKQNVG…HVTQTEIYGR (365 aa)) the chain is on the cytoplasmic side. The Protein kinase domain maps to 505–792 (FNVSNKLGQG…DLPRPKQPLF (288 aa)). ATP-binding positions include 511–519 (LGQGGFGPV) and lysine 533. Residues serine 539 and serine 554 each carry the phosphoserine modification. A caM-binding region spans residues 594-611 (TLKLQIDWPKRFNIIQGV). The Proton acceptor role is filled by aspartate 630. Phosphoserine is present on residues serine 634 and serine 647. Threonine 664 carries the post-translational modification Phosphothreonine. Residues serine 707, serine 708, and serine 808 each carry the phosphoserine modification. The residue at position 815 (threonine 815) is a Phosphothreonine.

It belongs to the protein kinase superfamily. Ser/Thr protein kinase family.

The protein resides in the cell membrane. The catalysed reaction is L-seryl-[protein] + ATP = O-phospho-L-seryl-[protein] + ADP + H(+). It catalyses the reaction L-threonyl-[protein] + ATP = O-phospho-L-threonyl-[protein] + ADP + H(+). This is G-type lectin S-receptor-like serine/threonine-protein kinase At1g11280 from Arabidopsis thaliana (Mouse-ear cress).